The following is an 83-amino-acid chain: Small ribosomal subunit protein uS17 (83 aa).

It belongs to the universal ribosomal protein uS17 family. In terms of assembly, part of the 30S ribosomal subunit.

Functionally, one of the primary rRNA binding proteins, it binds specifically to the 5'-end of 16S ribosomal RNA. The protein is Small ribosomal subunit protein uS17 of Chlamydia muridarum (strain MoPn / Nigg).